A 30-amino-acid chain; its full sequence is Hemocyanin subunit 2 (30 aa).

This sequence belongs to the tyrosinase family. Hemocyanin subfamily. In terms of tissue distribution, hemolymph.

The protein resides in the secreted. It localises to the extracellular space. Functionally, hemocyanins are copper-containing oxygen carriers occurring freely dissolved in the hemolymph of many mollusks and arthropods. This chain is Hemocyanin subunit 2, found in Homarus americanus (American lobster).